We begin with the raw amino-acid sequence, 162 residues long: MSGSSLRIVVPALLVIVGSVPVSLPAHAADGTIVVQRQVQPRVAYRPSMVPDPHPTVVDTNVSAEVNALANGAASGNTVSRELGDADFAIVTSGSGIRSMILTGSALPGFASQPANPATVQAVGNLGTTHGAGGGAGAGLAGQINGSLKQGLAPLQMLGGGQ.

Residues 1–28 form the signal peptide; the sequence is MSGSSLRIVVPALLVIVGSVPVSLPAHA.

It belongs to the FapA family. In terms of assembly, monomer in solution. Interacts with FapC but not FapB in vitro.

It localises to the periplasm. An intrinsically disordered chaperone for fibril amyloid FapC that guards against fibrillation within the periplasm. Upon overexpression of the endogenous six-gene locus (fapA-fapF), cells form large clumps during liquid growth, make large amounts of biofilm and produce amyloid fibrils. The sequence is that of Functional amyloid chaperone FapA from Pseudomonas aeruginosa (strain ATCC 15692 / DSM 22644 / CIP 104116 / JCM 14847 / LMG 12228 / 1C / PRS 101 / PAO1).